We begin with the raw amino-acid sequence, 843 residues long: MECNLAQAKQWVSALDQRRFERALQGSGDAFQHVLAIVPLLLHLNHPQLPGYVIHAPSGIASFLASDYQKKWLTNEYGIHYADHKPSTLKSAVNFHEVFPPILGVYVMGSFGSISQTSSSDLDTWICVRDGLSLDEYTLLTQKAKRISEWAMQFNVEINFYLMDQQRFRNEHYADPLTIENSGSAQYMLLLDEFYRSAVRLAGKPLLWLHLWVENEKDYEKEVARLITEGEIDPNDWVDFGGLGQFSANEYFGASLWHLYKGIDSPYKSVLKILLLEAYSKEYPNTCLIARTFKRDLLAGNTNPDHHFDPYIAILAKVTQYLTALSEFKRLDFVHRCFYVKATEDFARYQANNWRIRYMEILAQEWGWSAETVKHLNKRPFWKIKAVKENHDNIMKFLMLSYRNLVEFARKHHIHSSVVPQDINILSRKLYTAFEELPGKVSLLNTQISHNLSEAHLTFVEVRGNKHFKDGWYLINQPIHHIMFSKERVIEYGESLNKLVSWAYFNHLLTEKTELSIFSKNVTLSTLQRFVTNLRQSFPSTIAKQPKNSDLLNQCEIRSLFIAINLTTDPTSKVEEVLTGISSRDLFSFGSLEQSLVGSIDFTYRNVWNEIRTLHFEGQNAILLALKVLSNKIYRGVNRPDSIQVYCYSERYRQDLRQLVMGLVNRCVSIQVGDIQQPCQTSRLRVAGKNWQLFFEDRGISLQEIGNESVCNEAESAVDFDEVLQTPIEDGETNQESRRYPPEMDAFASEGFLQFFFEDNSDHSFNVYILDESNHLEIYRHCDGEKDEKVREINQLYQNAKQEGDKNPYNIVQHNFNYPQFYQLQNGKNGISIVPFKFRQMNK.

The catalytic stretch occupies residues 1 to 542 (MECNLAQAKQ…NLRQSFPSTI (542 aa)). Residues 549–843 (SDLLNQCEIR…VPFKFRQMNK (295 aa)) are regulatory.

This sequence belongs to the adenylyl cyclase class-1 family.

The protein resides in the cytoplasm. The enzyme catalyses ATP = 3',5'-cyclic AMP + diphosphate. Functionally, plays an essential role in competence development. The polypeptide is Adenylate cyclase (cyaA) (Haemophilus influenzae (strain ATCC 51907 / DSM 11121 / KW20 / Rd)).